Consider the following 106-residue polypeptide: Iron-sulfur cluster assembly protein CyaY (106 aa).

Belongs to the frataxin family.

Involved in iron-sulfur (Fe-S) cluster assembly. May act as a regulator of Fe-S biogenesis. The sequence is that of Iron-sulfur cluster assembly protein CyaY from Salmonella agona (strain SL483).